A 429-amino-acid chain; its full sequence is Saccharopine dehydrogenase-like oxidoreductase (429 aa).

Alanine 2 bears the N-acetylalanine mark. Phosphoserine occurs at positions 209, 215, and 217.

This sequence belongs to the saccharopine dehydrogenase family.

This Rattus norvegicus (Rat) protein is Saccharopine dehydrogenase-like oxidoreductase (Sccpdh).